The sequence spans 150 residues: Monothiol glutaredoxin-S13 (150 aa).

The segment at 30 to 52 is disordered; that stretch reads PSSSSSSLSWLTSGSPKPTSISN. Low complexity predominate over residues 31 to 44; sequence SSSSSSLSWLTSGS. One can recognise a Glutaredoxin domain in the interval 53 to 149; it reads KRSSNLVVME…PTLRQAGALW (97 aa). A [2Fe-2S] cluster-binding site is contributed by C73. The short motif at 147–150 is the Responsive for interaction with TGA factors element; the sequence is ALWL.

Belongs to the glutaredoxin family. CC-type subfamily.

It localises to the cytoplasm. The protein resides in the nucleus. Its function is as follows. May only reduce GSH-thiol disulfides, but not protein disulfides. This is Monothiol glutaredoxin-S13 (GRXS13) from Arabidopsis thaliana (Mouse-ear cress).